A 196-amino-acid polypeptide reads, in one-letter code: Mpv17-like protein (196 aa).

Residues 1-16 are Cytoplasmic-facing; the sequence is MAGWWPALSRAARRHP. Residues 16–55 form a targeting to peroxisomes region; sequence PWPTNVLLYGSLVSAGDALQQRLQGREANWRQTRRVATLV. Residues 17 to 34 form a helical membrane-spanning segment; that stretch reads WPTNVLLYGSLVSAGDAL. The Lumenal portion of the chain corresponds to 35–50; it reads QQRLQGREANWRQTRR. The chain crosses the membrane as a helical span at residues 51 to 67; that stretch reads VATLVVTFHANFNYVWL. Residues 68 to 90 lie on the Cytoplasmic side of the membrane; the sequence is RLLERALPGRAPHALLAKLLCDQ. Residues 91 to 108 traverse the membrane as a helical segment; sequence VVGAPIAVSAFYVGMSIL. Residues 109–150 are Lumenal-facing; that stretch reads QGKDDIFLDLKQKFWNTYLSGLMYWPFVQLTNFSLVPVQWRT. A helical transmembrane segment spans residues 151 to 167; it reads AYAGVCGFLWATFICFS. Over 168-196 the chain is Cytoplasmic; the sequence is QQSGDGTFKSAFTILYTKGTSATEGYPKK.

It belongs to the peroxisomal membrane protein PXMP2/4 family. In terms of tissue distribution, isoform 1 is detected in the kidney (at protein level). Isoform 1 and isoform 2 are expressed in the kidney, heart, liver, lung, pancreas and skeletal muscle.

It is found in the peroxisome membrane. Functionally, participates in reactive oxygen species metabolism by up- or down-regulation of the genes of antioxidant enzymes. Protective against the mitochondrial apoptotic cascade. The sequence is that of Mpv17-like protein (MPV17L) from Homo sapiens (Human).